The sequence spans 312 residues: DDRGK domain-containing protein 1 (312 aa).

Topologically, residues 1–2 (ME) are lumenal. Residues 3-23 (LIILVGIAIALLVVIITLYLL) traverse the membrane as a helical segment. Topologically, residues 24-312 (QKKNAAPETK…ISAGGEEASS (289 aa)) are cytoplasmic. Residues 30–163 (PETKPAAAPQ…KQQEDLEAEV (134 aa)) form a disordered region. Positions 52–85 (RRAQIARNQRNRLRQNAPAAPAGQVAPAAGAPAA) are enriched in low complexity. The span at 90-99 (DHEDEGQVDA) shows a compositional bias: acidic residues. A compositionally biased stretch (basic and acidic residues) spans 110–163 (LDEKMGAKKRAKMEAKEQKRLQREQELHDREQRKVKEAKEEAERKQQEDLEAEV).

The protein belongs to the DDRGK1 family. Interacts with Atg9; the interaction is transient.

It is found in the endoplasmic reticulum membrane. Functionally, substrate adapter for ufmylation, the covalent attachment of the ubiquitin-like modifier UFM1 to substrate proteins. Required for ufmylation of Atg9; protects the nervous system during aging, possibly by stabilizing Atg9 and supporting its function. The sequence is that of DDRGK domain-containing protein 1 from Drosophila erecta (Fruit fly).